Here is a 67-residue protein sequence, read N- to C-terminus: Large ribosomal subunit protein bL35 (67 aa).

Basic residues predominate over residues 1–16 (MPKMKTKSGAKKRFRV). The tract at residues 1–25 (MPKMKTKSGAKKRFRVRPGGTVKRG) is disordered.

Belongs to the bacterial ribosomal protein bL35 family.

This chain is Large ribosomal subunit protein bL35, found in Polaromonas sp. (strain JS666 / ATCC BAA-500).